Here is a 189-residue protein sequence, read N- to C-terminus: MARAQWLRAAVLGANDGLVSVASLMIGIGAVNENNKAMLVSGLAGLVAGACSMAIGEFVSVYAQYDIEVTQIERDGDIDGADAAAAREKLPSPTQAAFASALAFAIGGLLPLLTSGFIKPWGPRVGVVCAASSVGLAGFGAAGGYLGGANMVRSGTRVLLGGWLAMLITYAVLRLFATIFHGMNISSSA.

Residues 1–10 (MARAQWLRAA) are Cytoplasmic-facing. A helical transmembrane segment spans residues 11 to 31 (VLGANDGLVSVASLMIGIGAV). Topologically, residues 32–38 (NENNKAM) are vacuolar. Residues 39-59 (LVSGLAGLVAGACSMAIGEFV) traverse the membrane as a helical segment. The Cytoplasmic portion of the chain corresponds to 60-97 (SVYAQYDIEVTQIERDGDIDGADAAAAREKLPSPTQAA). Residues 98–118 (FASALAFAIGGLLPLLTSGFI) traverse the membrane as a helical segment. Residues 119–124 (KPWGPR) are Vacuolar-facing. A helical transmembrane segment spans residues 125–145 (VGVVCAASSVGLAGFGAAGGY). Over 146–159 (LGGANMVRSGTRVL) the chain is Cytoplasmic. A helical membrane pass occupies residues 160 to 180 (LGGWLAMLITYAVLRLFATIF). Residues 181–189 (HGMNISSSA) are Vacuolar-facing.

Belongs to the CCC1 family.

Its subcellular location is the vacuole membrane. It carries out the reaction Fe(2+)(in) = Fe(2+)(out). Its function is as follows. Probable vacuolar iron transporter that may be involved in the regulation of iron distribution throughout the plant. The chain is Vacuolar iron transporter homolog 2 from Oryza sativa subsp. japonica (Rice).